Reading from the N-terminus, the 285-residue chain is Small ribosomal subunit protein uS2 (285 aa).

Positions 229–285 are disordered; the sequence is AGLASGDAKPEAGAGEPLAEWEQELLAQANPNAEGSAEAAPAAATEEAPAAQTPADF. The span at 257-285 shows a compositional bias: low complexity; sequence ANPNAEGSAEAAPAAATEEAPAAQTPADF.

This sequence belongs to the universal ribosomal protein uS2 family.

This is Small ribosomal subunit protein uS2 from Nocardia farcinica (strain IFM 10152).